The primary structure comprises 1342 residues: DNA-directed RNA polymerase subunit beta (1342 aa).

This sequence belongs to the RNA polymerase beta chain family. As to quaternary structure, the RNAP catalytic core consists of 2 alpha, 1 beta, 1 beta' and 1 omega subunit. When a sigma factor is associated with the core the holoenzyme is formed, which can initiate transcription.

It catalyses the reaction RNA(n) + a ribonucleoside 5'-triphosphate = RNA(n+1) + diphosphate. DNA-dependent RNA polymerase catalyzes the transcription of DNA into RNA using the four ribonucleoside triphosphates as substrates. This is DNA-directed RNA polymerase subunit beta from Actinobacillus pleuropneumoniae serotype 5b (strain L20).